The following is a 449-amino-acid chain: Packaging protein 1 (449 aa).

The segment at 1 to 78 (METRGRRPAA…PAKRGDMLDR (78 aa)) is disordered. 171–178 (GPTGCGKS) serves as a coordination point for ATP. Residues 440 to 449 (RAYRARKTPK) are DNA-binding.

This sequence belongs to the adenoviridae packaging protein 1 family. In terms of assembly, homodimer. Part of a genome packaging complex composed of packaging proteins 1, 2 and 3; this complex specifically binds to the packaging sequence on the left end of viral genomic DNA and performs packaging of the viral genome. Interacts with protein 33K.

It is found in the virion. It localises to the host nucleus. The protein localises to the host nucleoplasm. Its subcellular location is the host nucleolus. Functionally, component of the packaging machinery which encapsidates the viral DNA into preformed capsids and transcriptional activator of the viral major late promoter (MLP). Binds, along with packaging proteins 2 and 3, to the specific packaging sequence on the left end of viral genomic DNA and displays ATPase activity thereby providing the power stroke of the packaging machinery. The activity of packaging protein IVa2 is stimulated by protein 33K which acts as a terminase. May be the protein that pumps DNA into the capsid powered by ATP hydrolysis. Specifically binds to the 5'-CG-3' nucleotides of the repeats making up the packaging sequence. Component of the DEF-A and DEF-B transcription factors that bind downstream elements of the major late promoter (MLP), and stimulate transcription from the MLP after initiation of viral DNA replication. DEF-A is a heterodimer packaging proteins 1 and 2 and DEF-B is a homodimer of packaging protein 1. The sequence is that of Packaging protein 1 from Human adenovirus C serotype 5 (HAdV-5).